The following is a 614-amino-acid chain: UDP-sugar pyrophosphorylase (614 aa).

Ala2 is subject to N-acetylalanine.

Belongs to the USP family. Mg(2+) serves as cofactor. The cofactor is Mn(2+). As to expression, ubiquitous, but most abundant in rosette leaves, inflorescences, stems, stamens and pollen.

It carries out the reaction a monosaccharide 1-phosphate + UTP + H(+) = a UDP-monosaccharide + diphosphate. In terms of biological role, required for the synthesis of the intine, the pectocellulosic inner wall of developing pollen. May function as the terminal enzyme of the myo-inositol oxidation (MIO) pathway. May also play a role in the salvage pathway for synthesis of nucleotide sugars. Can use a wide range of substrates including glucose-1-phosphate, galactose-1-phosphate, xylose-1-phosphate, arabinose-1-phosphate and glucuronate-1-phosphate. In Arabidopsis thaliana (Mouse-ear cress), this protein is UDP-sugar pyrophosphorylase (USP).